A 443-amino-acid chain; its full sequence is Methylenetetrahydrofolate--tRNA-(uracil-5-)-methyltransferase TrmFO (443 aa).

Residue 8 to 13 (GAGLAG) participates in FAD binding.

Belongs to the MnmG family. TrmFO subfamily. FAD is required as a cofactor.

The protein resides in the cytoplasm. The enzyme catalyses uridine(54) in tRNA + (6R)-5,10-methylene-5,6,7,8-tetrahydrofolate + NADH + H(+) = 5-methyluridine(54) in tRNA + (6S)-5,6,7,8-tetrahydrofolate + NAD(+). The catalysed reaction is uridine(54) in tRNA + (6R)-5,10-methylene-5,6,7,8-tetrahydrofolate + NADPH + H(+) = 5-methyluridine(54) in tRNA + (6S)-5,6,7,8-tetrahydrofolate + NADP(+). Its function is as follows. Catalyzes the folate-dependent formation of 5-methyl-uridine at position 54 (M-5-U54) in all tRNAs. The chain is Methylenetetrahydrofolate--tRNA-(uracil-5-)-methyltransferase TrmFO from Thermus thermophilus (strain ATCC BAA-163 / DSM 7039 / HB27).